The primary structure comprises 576 residues: Sodium/hydrogen exchanger 8 (576 aa).

11 helical membrane passes run 55 to 75 (MTIF…HLLI), 79 to 99 (LHFL…GAVI), 118 to 138 (PNMF…YSLH), 151 to 171 (LFAV…IYFL), 186 to 206 (FAFG…IFNA), 256 to 276 (LGYF…TGLI), 306 to 326 (GLAE…GIVM), 349 to 369 (VAFL…FSFP), 374 to 394 (ISFV…NIFP), 412 to 432 (MFIM…SLHL), and 446 to 466 (TTIV…MPLI). Thr-505 carries the phosphothreonine modification. Phosphoserine is present on residues Ser-566 and Ser-568.

The protein belongs to the monovalent cation:proton antiporter 1 (CPA1) transporter (TC 2.A.36) family. Predominantly expressed in the liver, skeletal muscle, kidney, and testis. Expressed in both renal cortex and medulla. Detected throughout the entire gastrointestinal tract, with high expression detected in stomach, duodenum and ascending colon. In gastric epithelium; expressed in the glands within the fundus and pylorus regions.

The protein localises to the golgi apparatus membrane. Its subcellular location is the golgi apparatus. It is found in the trans-Golgi network membrane. It localises to the endosome. The protein resides in the multivesicular body membrane. The protein localises to the apical cell membrane. Its subcellular location is the cytoplasmic vesicle. It is found in the secretory vesicle. It localises to the acrosome. It catalyses the reaction Na(+)(in) + H(+)(out) = Na(+)(out) + H(+)(in). In terms of biological role, na(+)/H(+) antiporter. Mediates the electoneutral exchange of intracellular H(+) ions for extracellular Na(+) in 1:1 stoichiometry. Acts as an Na(+)/H(+) exchanger in the trans-Golgi. Contributes to the regulation of pH regulation of Golgi apparatus, and consequently, in protein trafficking and endosomal morphology. Plays a crucial role in germ cells in acrosome biogenesis and sperm development, probably by playing a role in the fusion of the Golgi-derived vesicles that form the acrosomal cap. Can also be active at the cell surface of specialized cells. In the small intestine, plays a major physiological role in transepithelial absorption of Na(+). Regulates intracellular pH homeostasis of intestinal epithelial cells. Acts as an important regulator of mucosal integrity in the intestine and in the stomach, could mediate the pH fluctuation necessary for mucin exocytosis or assist membrane trafficking of other proteins. Plays a role in photoreceptor survival and in the maintenance of intracellular pH homeostasis in retinal pigment epithelium (RPE cells). This chain is Sodium/hydrogen exchanger 8 (Slc9a8), found in Mus musculus (Mouse).